The chain runs to 520 residues: Glycosyl hydrolase family 109 protein 5 (520 aa).

A signal peptide spans 1–27; the sequence is MRTFKSLMISLCMGTTLCMCLPQTTTA. NAD(+) contacts are provided by residues 77–78, Asp99, 147–150, 167–168, and Asn196; these read MR, WLHH, and EV. Substrate-binding positions include Tyr225, Arg248, 260–263, and Tyr338; that span reads YATH. Tyr260 is an NAD(+) binding site.

This sequence belongs to the Gfo/Idh/MocA family. Glycosyl hydrolase 109 subfamily. It depends on NAD(+) as a cofactor.

Functionally, glycosidase. This chain is Glycosyl hydrolase family 109 protein 5, found in Phocaeicola vulgatus (strain ATCC 8482 / DSM 1447 / JCM 5826 / CCUG 4940 / NBRC 14291 / NCTC 11154) (Bacteroides vulgatus).